Reading from the N-terminus, the 229-residue chain is UPF0488 protein C8orf33 homolog (229 aa).

Ala2 is modified (N-acetylalanine). Residue Arg27 is modified to Omega-N-methylarginine. Residues 55–101 (SRAHPLGDEGGTASKKQNKKKKTRNRASVANGGEKASEKLAPEEVPL) are disordered. Basic residues predominate over residues 70–79 (KQNKKKKTRN). At Ser82 the chain carries Phosphoserine.

This sequence belongs to the UPF0488 family.

This Pongo abelii (Sumatran orangutan) protein is UPF0488 protein C8orf33 homolog.